The primary structure comprises 121 residues: uncharacterized protein (121 aa).

3 helical membrane-spanning segments follow: residues 12–32, 35–55, and 67–87; these read MIGI…HPGV, VIQP…FGGL, and VFVV…YVGD.

The protein belongs to the sbp family.

Its subcellular location is the cell membrane. This is an uncharacterized protein from Mycobacterium bovis (strain ATCC BAA-935 / AF2122/97).